Here is a 346-residue protein sequence, read N- to C-terminus: Histone PARylation factor 1 (346 aa).

At Met-1 the chain carries N-acetylmethionine. N6-acetyllysine occurs at positions 19, 186, and 233. Asp-235 bears the PolyADP-ribosyl aspartic acid mark. Tyr-238 carries the post-translational modification ADP-ribosyltyrosine. Residue Glu-240 is modified to PolyADP-ribosyl glutamic acid. An interaction with PARP1 region spans residues 242–346; sequence PETDADLKRI…SEENIDQLAG (105 aa). The Proton donor role is filled by Glu-284.

It belongs to the HPF1 family. In terms of assembly, interacts with PARP1 (via the PARP catalytic domain). Interacts with PARP2 (via the PARP catalytic domain). Interacts with core nucleosomes in a PARP1- and PARP2-dependent manner.

It localises to the chromosome. It is found in the nucleus. In terms of biological role, cofactor for serine ADP-ribosylation that confers serine specificity on PARP1 and PARP2 and plays a key role in DNA damage response. Initiates the repair of double-strand DNA breaks: recruited to DNA damage sites by PARP1 and PARP2 and switches the amino acid specificity of PARP1 and PARP2 from aspartate or glutamate to serine residues, licensing serine ADP-ribosylation of target proteins. Serine ADP-ribosylation of target proteins, such as histones, promotes decompaction of chromatin and the recruitment of repair factors leading to the reparation of DNA strand breaks. Serine ADP-ribosylation of proteins constitutes the primary form of ADP-ribosylation of proteins in response to DNA damage. HPF1 acts by completing the active site of PARP1 and PARP2: forms a composite active site composed of residues from HPF1 and PARP1 or PARP2. While HPF1 promotes the initiation of serine ADP-ribosylation, it restricts the polymerase activity of PARP1 and PARP2 in order to limit the length of poly-ADP-ribose chains. HPF1 also promotes tyrosine ADP-ribosylation, probably by conferring tyrosine specificity on PARP1. The sequence is that of Histone PARylation factor 1 from Mus musculus (Mouse).